We begin with the raw amino-acid sequence, 237 residues long: NAD-dependent protein deacetylase (237 aa).

One can recognise a Deacetylase sirtuin-type domain in the interval 1 to 237; that stretch reads MQDITQAEAI…TIFAELTIKE (237 aa). NAD(+) is bound by residues A25, T29, R37, Q100, I102, D103, and H118. Residues I102 and D103 each contribute to the nicotinamide site. The Proton acceptor role is filled by H118. Zn(2+)-binding residues include C126, C129, H144, and C147. Positions 185, 186, and 209 each coordinate NAD(+).

The protein belongs to the sirtuin family. Class U subfamily.

Its subcellular location is the cytoplasm. It carries out the reaction N(6)-acetyl-L-lysyl-[protein] + NAD(+) + H2O = 2''-O-acetyl-ADP-D-ribose + nicotinamide + L-lysyl-[protein]. In terms of biological role, NAD-dependent protein deacetylase which modulates the activities of several enzymes which are inactive in their acetylated form. The polypeptide is NAD-dependent protein deacetylase (Enterococcus faecalis (strain ATCC 700802 / V583)).